Reading from the N-terminus, the 772-residue chain is MLSLKKYFTEGLIQFTILLSLIGVRVDVDTYLNSQLPPLREIILGQSSAYTQTQFHNLRNTLDGYGIHPKSVDLDYYFTARRLLNQVRALDRFQVPTTEVSAWLVHRDPDGSVSGTQPSAGIALENSGGLQDGTGPDGAVRESGAEQGFGEELEDLGAVAAPVNGDLTKEDIDLIDILWRQDIDLGAGREIFDYSHRQKESEVDKELSDGRERGDGWRSAGGQVTNRNLLVDGETGESFPAQVPGVEDQTALSLEECLRLLEATFPFGENSEFPAADVSTLSEAVPSESRPAGIQSSLLSPLLPETESPFDLEQQWQDLMSIMEMQAMEVNNTTAETLYNGTSGDLLTSNYNLAPNTPINQNVSLHQASLGSCSQDFSLFSSEIESPSMGGSSALLQLAPDNSTGLNTTFSSTNFSGIFFPPQLNSTVNETAGPELPDPLGGLLDEAMLDEISLMDLAIEEGFNPVQASQLEEEFDSDSGLSLDSGHSPASLSSSEASSSSSSSSSSSSSSSSSSSSFSEEGAVGYSSDSENVDFEEAEGAVGYQPEYSKFCRMSYQDPSQLHYLPYLEHVGHNHTYNMAPGTLDPEEPKLPSVGKKSSKEKPSEFLDKQMSRDEHRARAMKIPFTNDKIINLPVEEFNELLSKYQLSEAQLSLIRDIRRRGKNKMAAQNCRKRKLDTILNLERDVEDLQRDKSKLLREKVEFLKSIRQMKQKVQNLYQEVFGRLRDENGQPYSPNQYALQYASDGSVILIPRTLADQQARRQERKQKDRRK.

The helical; Signal-anchor for type II membrane protein transmembrane segment at 7 to 24 (YFTEGLIQFTILLSLIGV) threads the bilayer. The cholesterol recognition/amino acid consensus (CRAC) region stretch occupies residues 191-199 (IFDYSHRQK). Residues 198-216 (QKESEVDKELSDGRERGDG) are compositionally biased toward basic and acidic residues. A disordered region spans residues 198–223 (QKESEVDKELSDGRERGDGWRSAGGQ). N-linked (GlcNAc...) asparagine glycans are attached at residues Asn-332, Asn-340, Asn-362, Asn-402, Asn-407, Asn-414, Asn-425, and Asn-429. The segment at 472–531 (EEEFDSDSGLSLDSGHSPASLSSSEASSSSSSSSSSSSSSSSSSSSFSEEGAVGYSSDSE) is disordered. The segment covering 478–519 (DSGLSLDSGHSPASLSSSEASSSSSSSSSSSSSSSSSSSSFS) has biased composition (low complexity). Asn-574 is a glycosylation site (N-linked (GlcNAc...) asparagine). A disordered region spans residues 581–613 (PGTLDPEEPKLPSVGKKSSKEKPSEFLDKQMSR). Over residues 598–613 (SSKEKPSEFLDKQMSR) the composition is skewed to basic and acidic residues. Residues 654-717 (LIRDIRRRGK…RQMKQKVQNL (64 aa)) enclose the bZIP domain. The segment at 656-675 (RDIRRRGKNKMAAQNCRKRK) is basic motif. Residues 682–696 (LERDVEDLQRDKSKL) form a leucine-zipper region. A Nuclear localization signal motif is present at residues 761 to 768 (RRQERKQK).

Belongs to the bZIP family. CNC subfamily. In terms of assembly, interacts (via the bZIP domain) with small MAF protein (MAFF, MAFG or MAFK); required for binding to antioxidant response elements (AREs) on DNA. In terms of processing, cleaved at Leu-104 following retrotranslocation, releasing the protein from the endoplasmic reticulum membrane and forming the transcription factor NRF1 that translocates into the nucleus.

The protein resides in the endoplasmic reticulum membrane. It localises to the nucleus. Functionally, endoplasmic reticulum membrane sensor that translocates into the nucleus in response to various stresses to act as a transcription factor. Constitutes a precursor of the transcription factor NRF1. Able to detect various cellular stresses, such as cholesterol excess, oxidative stress or proteasome inhibition. In response to stress, it is released from the endoplasmic reticulum membrane following cleavage and translocates into the nucleus to form the transcription factor NRF1. Acts as a key sensor of cholesterol excess: in excess cholesterol conditions, the endoplasmic reticulum membrane form of the protein directly binds cholesterol via its CRAC motif, preventing cleavage and release of the transcription factor NRF1, thereby allowing expression of genes promoting cholesterol removal. Involved in proteasome homeostasis: in response to proteasome inhibition, it is released from the endoplasmic reticulum membrane, translocates to the nucleus and activates expression of genes encoding proteasome subunits. Its function is as follows. CNC-type bZIP family transcription factor that translocates to the nucleus and regulates expression of target genes in response to various stresses. Heterodimerizes with small-Maf proteins (MAFF, MAFG or MAFK) and binds DNA motifs including the antioxidant response elements (AREs), which regulate expression of genes involved in oxidative stress response. Activates or represses expression of target genes, depending on the context. Plays a key role in cholesterol homeostasis by acting as a sensor of cholesterol excess: in low cholesterol conditions, translocates into the nucleus and represses expression of genes involved in defense against cholesterol excess. In excess cholesterol conditions, the endoplasmic reticulum membrane form of the protein directly binds cholesterol via its CRAC motif, preventing cleavage and release of the transcription factor NRF1, thereby allowing expression of genes promoting cholesterol removal. Critical for redox balance in response to oxidative stress: acts by binding the AREs motifs on promoters and mediating activation of oxidative stress response genes. Involved in proteasome homeostasis: in response to proteasome inhibition, mediates the 'bounce-back' of proteasome subunits by translocating into the nucleus and activating expression of genes encoding proteasome subunits. The sequence is that of Endoplasmic reticulum membrane sensor NFE2L1 from Gallus gallus (Chicken).